Here is a 132-residue protein sequence, read N- to C-terminus: uncharacterized protein (132 aa).

The tract at residues 68–91 is disordered; sequence WSRTSPNSSRSSPRSPASMASTSS.

This is an uncharacterized protein from Streptomyces cacaoi.